A 165-amino-acid chain; its full sequence is Iron sulfur cluster assembly protein 1, mitochondrial (165 aa).

The transit peptide at 1–27 (MLPVITRFARPALMAIRPVNAMGVLRA) directs the protein to the mitochondrion. The segment at 132–136 (LPPVK) is SSQ1 binding region.

Belongs to the NifU family. Homodimer, but can exist as monomers or trimers. Oligomerization may be regulated by Zn(2+) availability. Component of the core Fe-S cluster (ISC) assembly machinery. Interacts with YFH1/frataxin with a 1 to 1 stoichiometry; the interaction is direct. Interacts with the mitochondrial co-chaperones JAC1 and SSQ1. Interacts with NFS1. Interacts with YAH1/ferredoxin; interacts with the reduced form. It depends on [2Fe-2S] cluster as a cofactor. Zn(2+) is required as a cofactor.

It is found in the mitochondrion matrix. It participates in cofactor biosynthesis; iron-sulfur cluster biosynthesis. Its function is as follows. Scaffold protein for the de novo synthesis of iron-sulfur (Fe-S) clusters within mitochondria, which is required for maturation of both mitochondrial and cytoplasmic [2Fe-2S] and [4Fe-4S] proteins. First, a [2Fe-2S] cluster is transiently assembled on the scaffold proteins ISU1 and ISU2. In a second step, the cluster is released from ISU1/ISU2, transferred to glutaredoxin GRX5, followed by the formation of mitochondrial [2Fe-2S] proteins, the synthesis of [4Fe-4S] clusters and their target-specific insertion into the recipient apoproteins. Cluster assembly on ISU1/ISU2 depends on the function of the cysteine desulfurase complex NFS1-ISD11, which serves as the sulfur donor for cluster synthesis, the iron-binding protein frataxin (YFH1) as the putative iron donor, and the electron transfer chain comprised of ferredoxin reductase ARH1 and ferredoxin YAH1, which receive their electrons from NADH. Fe-S cluster release from ISU1/ISU2 is achieved by interaction with the Hsp70 chaperone SSQ1, assisted by the DnaJ-like co-chaperone JAC1 and the nucleotide exchange factor MGE1. ISU1 is the major isoform in yeast, while ISU2 is not detectable in cells grown to stationary phase. Also involved in production of a sulfur precursor required for thiolation of cytoplasmic tRNAs. This is Iron sulfur cluster assembly protein 1, mitochondrial from Saccharomyces cerevisiae (strain ATCC 204508 / S288c) (Baker's yeast).